A 460-amino-acid polypeptide reads, in one-letter code: Probable fibrosin-1 (460 aa).

A Glycyl lysine isopeptide (Lys-Gly) (interchain with G-Cter in SUMO2) cross-link involves residue K8. 3 disordered regions span residues 40–79, 205–311, and 406–460; these read SLQGAFQPKSTNPELPPRLGPVPSGLSQKGTQIPDHFRPP, FAQK…KEEA, and YSRL…RADR. The segment covering 212–223 has biased composition (pro residues); sequence GAPPAFASPPDP. 2 positions are modified to asymmetric dimethylarginine: R229 and R239. The segment covering 248 to 272 has biased composition (basic and acidic residues); sequence GSDKERPVERREPSITKEEKDRDLP. The residue at position 281 (S281) is a Phosphoserine. Over residues 288 to 311 the composition is skewed to basic and acidic residues; it reads RAGEEGPRPTKESVRVKEERKEEA. The segment covering 436–453 has biased composition (pro residues); the sequence is APPPLVPAPRPSSPPRGP.

This is Probable fibrosin-1 (FBRS) from Homo sapiens (Human).